Consider the following 238-residue polypeptide: Phosphoribosylaminoimidazole-succinocarboxamide synthase (238 aa).

This sequence belongs to the SAICAR synthetase family.

The enzyme catalyses 5-amino-1-(5-phospho-D-ribosyl)imidazole-4-carboxylate + L-aspartate + ATP = (2S)-2-[5-amino-1-(5-phospho-beta-D-ribosyl)imidazole-4-carboxamido]succinate + ADP + phosphate + 2 H(+). It participates in purine metabolism; IMP biosynthesis via de novo pathway; 5-amino-1-(5-phospho-D-ribosyl)imidazole-4-carboxamide from 5-amino-1-(5-phospho-D-ribosyl)imidazole-4-carboxylate: step 1/2. The polypeptide is Phosphoribosylaminoimidazole-succinocarboxamide synthase (Marinomonas sp. (strain MWYL1)).